A 220-amino-acid polypeptide reads, in one-letter code: Protein US2 homolog (220 aa).

Belongs to the herpesviridae US2 family.

In Bovine herpesvirus 1.2 (strain ST) (BoHV-1), this protein is Protein US2 homolog.